A 351-amino-acid chain; its full sequence is MTIAIERNIQRGLFDLVDDWLKRDRFVFIGWSGLLLFPCSYLALGAWFTGTTFVTSWYTHGLASSYLEGCNFLTAAVSSPANSMGHSLLFLWGPEAQGDFTRWCQIGGLWTFTALHGAFGLIGFCLRQFEIARLVGIRPYNAIAFSGPIAVFVSVFLIYPLGQASWFFAPSFGVAAIFRFILFLQGFHNWTLNPFHMMGVAGILGGALLCAIHGATVENTLFEDGEAANTFRAFTPTQSEETYSMVTANRFWSQIFGVAFSNKRWLHFFMLFVPVTGLWTSSIGIIGLALNLRAYDFVSQELRAAEDPEFETFYTKNLLLNEGIRAWMATQDQPHENFVFPEEVLPRGNAL.

A helical membrane pass occupies residues 39–59; it reads CSYLALGAWFTGTTFVTSWYT. H116 is a chlorophyll a binding site. A helical membrane pass occupies residues 123-139; that stretch reads GFCLRQFEIARLVGIRP. The pheophytin a site is built by Q128 and N141. Residues 151-164 traverse the membrane as a helical segment; it reads VFVSVFLIYPLGQA. H196 is a binding site for chlorophyll a. A helical membrane pass occupies residues 206–226; that stretch reads GALLCAIHGATVENTLFEDGE. A plastoquinone-binding residues include H213 and F260. A Fe cation-binding site is contributed by H213. H267 serves as a coordination point for Fe cation. Residues 277-293 traverse the membrane as a helical segment; sequence GLWTSSIGIIGLALNLR.

The protein belongs to the reaction center PufL/M/PsbA/D family. PSII is composed of 1 copy each of membrane proteins PsbA, PsbB, PsbC, PsbD, PsbE, PsbF, PsbH, PsbI, PsbJ, PsbK, PsbL, PsbM, PsbT, PsbY, PsbZ, Psb30/Ycf12, at least 3 peripheral proteins of the oxygen-evolving complex and a large number of cofactors. It forms dimeric complexes. Requires The D1/D2 heterodimer binds P680, chlorophylls that are the primary electron donor of PSII, and subsequent electron acceptors. It shares a non-heme iron and each subunit binds pheophytin, quinone, additional chlorophylls, carotenoids and lipids. There is also a Cl(-1) ion associated with D1 and D2, which is required for oxygen evolution. The PSII complex binds additional chlorophylls, carotenoids and specific lipids. as cofactor.

The protein localises to the plastid. The protein resides in the chloroplast thylakoid membrane. The catalysed reaction is 2 a plastoquinone + 4 hnu + 2 H2O = 2 a plastoquinol + O2. Functionally, photosystem II (PSII) is a light-driven water:plastoquinone oxidoreductase that uses light energy to abstract electrons from H(2)O, generating O(2) and a proton gradient subsequently used for ATP formation. It consists of a core antenna complex that captures photons, and an electron transfer chain that converts photonic excitation into a charge separation. The D1/D2 (PsbA/PsbD) reaction center heterodimer binds P680, the primary electron donor of PSII as well as several subsequent electron acceptors. D2 is needed for assembly of a stable PSII complex. The protein is Photosystem II D2 protein of Galdieria sulphuraria (Red alga).